Consider the following 250-residue polypeptide: 2,3-bisphosphoglycerate-dependent phosphoglycerate mutase (250 aa).

Residues 10 to 17, 23 to 24, arginine 62, 89 to 92, lysine 100, 116 to 117, and 185 to 186 contribute to the substrate site; these read RHGESQWN, TG, ERHY, RR, and GN. Histidine 11 acts as the Tele-phosphohistidine intermediate in catalysis. Glutamate 89 functions as the Proton donor/acceptor in the catalytic mechanism.

This sequence belongs to the phosphoglycerate mutase family. BPG-dependent PGAM subfamily. Homodimer.

It carries out the reaction (2R)-2-phosphoglycerate = (2R)-3-phosphoglycerate. Its pathway is carbohydrate degradation; glycolysis; pyruvate from D-glyceraldehyde 3-phosphate: step 3/5. Catalyzes the interconversion of 2-phosphoglycerate and 3-phosphoglycerate. This is 2,3-bisphosphoglycerate-dependent phosphoglycerate mutase from Salmonella paratyphi A (strain ATCC 9150 / SARB42).